We begin with the raw amino-acid sequence, 276 residues long: 3-methyl-2-oxobutanoate hydroxymethyltransferase (276 aa).

Mg(2+) is bound by residues aspartate 50 and aspartate 89. Residues 50-51, aspartate 89, and lysine 119 contribute to the 3-methyl-2-oxobutanoate site; that span reads DS. Glutamate 121 serves as a coordination point for Mg(2+). Residue glutamate 188 is the Proton acceptor of the active site.

Belongs to the PanB family. In terms of assembly, homodecamer; pentamer of dimers. Requires Mg(2+) as cofactor.

It is found in the cytoplasm. The enzyme catalyses 3-methyl-2-oxobutanoate + (6R)-5,10-methylene-5,6,7,8-tetrahydrofolate + H2O = 2-dehydropantoate + (6S)-5,6,7,8-tetrahydrofolate. It participates in cofactor biosynthesis; (R)-pantothenate biosynthesis; (R)-pantoate from 3-methyl-2-oxobutanoate: step 1/2. Catalyzes the reversible reaction in which hydroxymethyl group from 5,10-methylenetetrahydrofolate is transferred onto alpha-ketoisovalerate to form ketopantoate. The chain is 3-methyl-2-oxobutanoate hydroxymethyltransferase from Paracoccus denitrificans (strain Pd 1222).